A 332-amino-acid polypeptide reads, in one-letter code: Glycerol-3-phosphate dehydrogenase [NAD(P)+] (332 aa).

Residues Ser11, Trp12, Arg32, Arg33, and Lys106 each coordinate NADPH. 2 residues coordinate sn-glycerol 3-phosphate: Lys106 and Gly136. Ala140 contacts NADPH. Sn-glycerol 3-phosphate is bound by residues Lys191, Asp244, Ser254, Arg255, and Asn256. Lys191 (proton acceptor) is an active-site residue. Arg255 is an NADPH binding site. Residues Val280 and Glu282 each coordinate NADPH.

Belongs to the NAD-dependent glycerol-3-phosphate dehydrogenase family.

The protein localises to the cytoplasm. It carries out the reaction sn-glycerol 3-phosphate + NAD(+) = dihydroxyacetone phosphate + NADH + H(+). The catalysed reaction is sn-glycerol 3-phosphate + NADP(+) = dihydroxyacetone phosphate + NADPH + H(+). It functions in the pathway membrane lipid metabolism; glycerophospholipid metabolism. Catalyzes the reduction of the glycolytic intermediate dihydroxyacetone phosphate (DHAP) to sn-glycerol 3-phosphate (G3P), the key precursor for phospholipid synthesis. This Corynebacterium kroppenstedtii (strain DSM 44385 / JCM 11950 / CIP 105744 / CCUG 35717) protein is Glycerol-3-phosphate dehydrogenase [NAD(P)+].